Reading from the N-terminus, the 156-residue chain is Small ribosomal subunit protein uS7 (156 aa).

The protein belongs to the universal ribosomal protein uS7 family. As to quaternary structure, part of the 30S ribosomal subunit. Contacts proteins S9 and S11.

In terms of biological role, one of the primary rRNA binding proteins, it binds directly to 16S rRNA where it nucleates assembly of the head domain of the 30S subunit. Is located at the subunit interface close to the decoding center, probably blocks exit of the E-site tRNA. In Sphingopyxis alaskensis (strain DSM 13593 / LMG 18877 / RB2256) (Sphingomonas alaskensis), this protein is Small ribosomal subunit protein uS7.